Here is a 116-residue protein sequence, read N- to C-terminus: Endocuticle structural glycoprotein ABD-4 (116 aa).

Gln-1 is modified (pyrrolidone carboxylic acid). The 73-residue stretch at 20–92 (DGSYQWNYET…PQGAHFPTPP (73 aa)) folds into the Chitin-binding type R&amp;R domain. The disordered stretch occupies residues 78 to 97 (ENGFVPQGAHFPTPPPIPPA). Thr-90 is a glycosylation site (O-linked (GalNAc) threonine; in ADB-4A, ABD-4B and ABD-4C). The O-linked (GalNAc) threonine; in ADB-4A and ABD-4B glycan is linked to Thr-107. A glycan (O-linked (GalNAc) threonine; in ADB-4A) is linked at Thr-111. Pro-116 carries the post-translational modification Proline amide.

3 variants exists that arise from a sequential glycosylation with N-acetylgalactosamine at three (ABD-4A), two (ABD-4B) or one (ABD-4C) threonine residues.

Component of the soft endocuticle of migratory locust. This is Endocuticle structural glycoprotein ABD-4 from Locusta migratoria (Migratory locust).